Consider the following 355-residue polypeptide: Iron deficiency-induced protein A (355 aa).

The segment at residues 1-34 (MEKVGRRVFLGMGAAATAYVTHHLWNQNAESSYA) is a signal peptide (tat-type signal). Positions 49, 50, 180, 236, and 237 each coordinate Fe cation.

It belongs to the bacterial solute-binding protein 1 family. Post-translationally, predicted to be exported by the Tat system. The position of the signal peptide cleavage has not been experimentally proven.

Its subcellular location is the cellular thylakoid membrane. In terms of biological role, plays an important role in protecting the acceptor side of photosystem II (PSII) against oxidative damage, especially under iron-limiting growth conditions. May also be part of a periplasmic ABC transporter complex involved in iron import. This is Iron deficiency-induced protein A (idiA) from Thermosynechococcus vestitus (strain NIES-2133 / IAM M-273 / BP-1).